The primary structure comprises 144 residues: 3-dehydroquinate dehydratase (144 aa).

Tyr23 functions as the Proton acceptor in the catalytic mechanism. Substrate-binding residues include Asn74, His80, and Asp87. Catalysis depends on His101, which acts as the Proton donor. Substrate-binding positions include 102–103 (LS) and Arg112.

Belongs to the type-II 3-dehydroquinase family. In terms of assembly, homododecamer.

It catalyses the reaction 3-dehydroquinate = 3-dehydroshikimate + H2O. It functions in the pathway metabolic intermediate biosynthesis; chorismate biosynthesis; chorismate from D-erythrose 4-phosphate and phosphoenolpyruvate: step 3/7. Functionally, catalyzes a trans-dehydration via an enolate intermediate. This chain is 3-dehydroquinate dehydratase, found in Mesorhizobium japonicum (strain LMG 29417 / CECT 9101 / MAFF 303099) (Mesorhizobium loti (strain MAFF 303099)).